A 466-amino-acid chain; its full sequence is CCA-adding enzyme (466 aa).

Ser-55 and Arg-58 together coordinate ATP. Ser-55 and Arg-58 together coordinate CTP. Mg(2+)-binding residues include Asp-67, Asp-69, and Asp-118. 3 residues coordinate ATP: His-141, Lys-161, and Tyr-170. His-141, Lys-161, and Tyr-170 together coordinate CTP.

This sequence belongs to the tRNA nucleotidyltransferase/poly(A) polymerase family. Archaeal CCA-adding enzyme subfamily. In terms of assembly, homodimer. Requires Mg(2+) as cofactor.

The catalysed reaction is a tRNA precursor + 2 CTP + ATP = a tRNA with a 3' CCA end + 3 diphosphate. It catalyses the reaction a tRNA with a 3' CCA end + 2 CTP + ATP = a tRNA with a 3' CCACCA end + 3 diphosphate. Functionally, catalyzes the addition and repair of the essential 3'-terminal CCA sequence in tRNAs without using a nucleic acid template. Adds these three nucleotides in the order of C, C, and A to the tRNA nucleotide-73, using CTP and ATP as substrates and producing inorganic pyrophosphate. tRNA 3'-terminal CCA addition is required both for tRNA processing and repair. Also involved in tRNA surveillance by mediating tandem CCA addition to generate a CCACCA at the 3' terminus of unstable tRNAs. While stable tRNAs receive only 3'-terminal CCA, unstable tRNAs are marked with CCACCA and rapidly degraded. In Haloarcula marismortui (strain ATCC 43049 / DSM 3752 / JCM 8966 / VKM B-1809) (Halobacterium marismortui), this protein is CCA-adding enzyme.